Here is a 348-residue protein sequence, read N- to C-terminus: Farnesoic acid carboxyl-O-methyltransferase (348 aa).

Position 16 (Tyr16) interacts with S-adenosyl-L-methionine. Residues Tyr16 and 19–23 (HSKYQ) each bind substrate. S-adenosyl-L-methionine-binding positions include Gly57, 57-58 (GC), Asn63, 94-97 (FNDS), 123-125 (SFF), and 140-142 (SYS). 141–145 (YSLHF) contributes to the substrate binding site. Mg(2+)-binding residues include Asn162, Asp247, and Phe249.

The protein belongs to the methyltransferase superfamily. SABATH family. In terms of assembly, homodimer. Requires Mg(2+) as cofactor. As to expression, mostly expressed in leaves and, at very low levels, in roots, stems, flowers and siliques.

It carries out the reaction (2E,6E)-farnesoate + S-adenosyl-L-methionine = methyl (2E,6E)-farnesoate + S-adenosyl-L-homocysteine. The catalysed reaction is juvenile hormone III carboxylate + S-adenosyl-L-methionine = juvenile hormone III + S-adenosyl-L-homocysteine. Its pathway is sesquiterpene biosynthesis. Its activity is regulated as follows. Activated by Mn(2+) ions. Strongly inhibited by Cu(2+), Zn(2+), Fe(3+) and Fe(2+) ions. Moderately inhibited by Na(+) and Ca(2+) ions. Rapidly degraded at temperatures above 40 degrees Celsius. In terms of biological role, may catalyze the production of the insect juvenile hormone methyl farnesoate (MeFA) to trigger defense against insect herbivory. The sequence is that of Farnesoic acid carboxyl-O-methyltransferase from Arabidopsis thaliana (Mouse-ear cress).